The primary structure comprises 54 residues: Large ribosomal subunit protein bL33 (54 aa).

Belongs to the bacterial ribosomal protein bL33 family.

The chain is Large ribosomal subunit protein bL33 from Buchnera aphidicola subsp. Cinara cedri (strain Cc).